The following is a 270-amino-acid chain: Ribosomal RNA small subunit methyltransferase A (270 aa).

Positions 16, 18, 43, 64, 89, and 110 each coordinate S-adenosyl-L-methionine.

The protein belongs to the class I-like SAM-binding methyltransferase superfamily. rRNA adenine N(6)-methyltransferase family. RsmA subfamily.

The protein resides in the cytoplasm. The enzyme catalyses adenosine(1518)/adenosine(1519) in 16S rRNA + 4 S-adenosyl-L-methionine = N(6)-dimethyladenosine(1518)/N(6)-dimethyladenosine(1519) in 16S rRNA + 4 S-adenosyl-L-homocysteine + 4 H(+). Functionally, specifically dimethylates two adjacent adenosines (A1518 and A1519) in the loop of a conserved hairpin near the 3'-end of 16S rRNA in the 30S particle. May play a critical role in biogenesis of 30S subunits. This Pseudomonas fluorescens (strain ATCC BAA-477 / NRRL B-23932 / Pf-5) protein is Ribosomal RNA small subunit methyltransferase A.